Reading from the N-terminus, the 61-residue chain is Protein stunted (61 aa).

The interval 3-15 (AWRAAGITYIQYS) is sufficient for mth activation.

Belongs to the eukaryotic ATPase epsilon family.

In terms of biological role, activates the G-protein coupled receptor mth in vitro, leading to increased intracellular calcium ion levels. This Drosophila melanogaster (Fruit fly) protein is Protein stunted.